The following is a 227-amino-acid chain: Cytochrome c oxidase subunit 2 (227 aa).

Residues methionine 1–serine 14 are Mitochondrial intermembrane-facing. A helical transmembrane segment spans residues proline 15 to threonine 45. At leucine 46–glutamine 59 the chain is on the mitochondrial matrix side. Residues glutamate 60–threonine 87 form a helical membrane-spanning segment. The Mitochondrial intermembrane segment spans residues aspartate 88–leucine 227. Positions 161, 196, 198, 200, 204, and 207 each coordinate Cu cation. Glutamate 198 lines the Mg(2+) pocket.

The protein belongs to the cytochrome c oxidase subunit 2 family. Component of the cytochrome c oxidase (complex IV, CIV), a multisubunit enzyme composed of 14 subunits. The complex is composed of a catalytic core of 3 subunits MT-CO1, MT-CO2 and MT-CO3, encoded in the mitochondrial DNA, and 11 supernumerary subunits COX4I, COX5A, COX5B, COX6A, COX6B, COX6C, COX7A, COX7B, COX7C, COX8 and NDUFA4, which are encoded in the nuclear genome. The complex exists as a monomer or a dimer and forms supercomplexes (SCs) in the inner mitochondrial membrane with NADH-ubiquinone oxidoreductase (complex I, CI) and ubiquinol-cytochrome c oxidoreductase (cytochrome b-c1 complex, complex III, CIII), resulting in different assemblies (supercomplex SCI(1)III(2)IV(1) and megacomplex MCI(2)III(2)IV(2)). Found in a complex with TMEM177, COA6, COX18, COX20, SCO1 and SCO2. Interacts with TMEM177 in a COX20-dependent manner. Interacts with COX20. Interacts with COX16. It depends on Cu cation as a cofactor.

It is found in the mitochondrion inner membrane. The catalysed reaction is 4 Fe(II)-[cytochrome c] + O2 + 8 H(+)(in) = 4 Fe(III)-[cytochrome c] + 2 H2O + 4 H(+)(out). Functionally, component of the cytochrome c oxidase, the last enzyme in the mitochondrial electron transport chain which drives oxidative phosphorylation. The respiratory chain contains 3 multisubunit complexes succinate dehydrogenase (complex II, CII), ubiquinol-cytochrome c oxidoreductase (cytochrome b-c1 complex, complex III, CIII) and cytochrome c oxidase (complex IV, CIV), that cooperate to transfer electrons derived from NADH and succinate to molecular oxygen, creating an electrochemical gradient over the inner membrane that drives transmembrane transport and the ATP synthase. Cytochrome c oxidase is the component of the respiratory chain that catalyzes the reduction of oxygen to water. Electrons originating from reduced cytochrome c in the intermembrane space (IMS) are transferred via the dinuclear copper A center (CU(A)) of subunit 2 and heme A of subunit 1 to the active site in subunit 1, a binuclear center (BNC) formed by heme A3 and copper B (CU(B)). The BNC reduces molecular oxygen to 2 water molecules using 4 electrons from cytochrome c in the IMS and 4 protons from the mitochondrial matrix. This chain is Cytochrome c oxidase subunit 2 (MT-CO2), found in Macaca fascicularis (Crab-eating macaque).